A 227-amino-acid polypeptide reads, in one-letter code: Cytochrome c oxidase subunit 2 (227 aa).

Topologically, residues 1 to 14 (MAYPFQLGLQDATS) are mitochondrial intermembrane. A helical membrane pass occupies residues 15-45 (PIMEELTNFHDHTLMIVFLISSLVLYIISLM). Over 46–59 (LTTKLTHTSTMDAQ) the chain is Mitochondrial matrix. Residues 60–87 (EVETIWTILPAAILILIALPSLRILYMM) form a helical membrane-spanning segment. Residues 88–227 (DEINNPVLTV…YFENWSTSMI (140 aa)) are Mitochondrial intermembrane-facing. Residues histidine 161, cysteine 196, glutamate 198, cysteine 200, histidine 204, and methionine 207 each coordinate Cu cation. Residue glutamate 198 participates in Mg(2+) binding. The residue at position 218 (tyrosine 218) is a Phosphotyrosine.

Belongs to the cytochrome c oxidase subunit 2 family. Component of the cytochrome c oxidase (complex IV, CIV), a multisubunit enzyme composed of 14 subunits. The complex is composed of a catalytic core of 3 subunits MT-CO1, MT-CO2 and MT-CO3, encoded in the mitochondrial DNA, and 11 supernumerary subunits COX4I, COX5A, COX5B, COX6A, COX6B, COX6C, COX7A, COX7B, COX7C, COX8 and NDUFA4, which are encoded in the nuclear genome. The complex exists as a monomer or a dimer and forms supercomplexes (SCs) in the inner mitochondrial membrane with NADH-ubiquinone oxidoreductase (complex I, CI) and ubiquinol-cytochrome c oxidoreductase (cytochrome b-c1 complex, complex III, CIII), resulting in different assemblies (supercomplex SCI(1)III(2)IV(1) and megacomplex MCI(2)III(2)IV(2)). Found in a complex with TMEM177, COA6, COX18, COX20, SCO1 and SCO2. Interacts with TMEM177 in a COX20-dependent manner. Interacts with COX20. Interacts with COX16. Cu cation serves as cofactor.

Its subcellular location is the mitochondrion inner membrane. The enzyme catalyses 4 Fe(II)-[cytochrome c] + O2 + 8 H(+)(in) = 4 Fe(III)-[cytochrome c] + 2 H2O + 4 H(+)(out). Component of the cytochrome c oxidase, the last enzyme in the mitochondrial electron transport chain which drives oxidative phosphorylation. The respiratory chain contains 3 multisubunit complexes succinate dehydrogenase (complex II, CII), ubiquinol-cytochrome c oxidoreductase (cytochrome b-c1 complex, complex III, CIII) and cytochrome c oxidase (complex IV, CIV), that cooperate to transfer electrons derived from NADH and succinate to molecular oxygen, creating an electrochemical gradient over the inner membrane that drives transmembrane transport and the ATP synthase. Cytochrome c oxidase is the component of the respiratory chain that catalyzes the reduction of oxygen to water. Electrons originating from reduced cytochrome c in the intermembrane space (IMS) are transferred via the dinuclear copper A center (CU(A)) of subunit 2 and heme A of subunit 1 to the active site in subunit 1, a binuclear center (BNC) formed by heme A3 and copper B (CU(B)). The BNC reduces molecular oxygen to 2 water molecules using 4 electrons from cytochrome c in the IMS and 4 protons from the mitochondrial matrix. This chain is Cytochrome c oxidase subunit 2 (MT-CO2), found in Arvicanthis somalicus (Neumann's grass rat).